A 248-amino-acid polypeptide reads, in one-letter code: Probable transcriptional regulatory protein Nwi_2729 (248 aa).

The interval 1 to 21 (MAGHSQFKNIMHRKGRQDAQK) is disordered.

The protein belongs to the TACO1 family.

The protein localises to the cytoplasm. The chain is Probable transcriptional regulatory protein Nwi_2729 from Nitrobacter winogradskyi (strain ATCC 25391 / DSM 10237 / CIP 104748 / NCIMB 11846 / Nb-255).